The sequence spans 411 residues: Protein translocase subunit SecY (411 aa).

10 helical membrane passes run 11–31 (IIFT…PVPG), 52–72 (IFSG…VPYI), 111–131 (ALGW…PYVF), 135–155 (FAFV…IMWL), 163–180 (GIGN…VSGL), 197–217 (SLKF…TICV), 253–273 (VMPI…TQII), 291–311 (LYLL…TSIV), 349–369 (TFLG…IEKV), and 377–397 (GLGA…AKQI).

It belongs to the SecY/SEC61-alpha family. As to quaternary structure, component of the plastid Sec protein translocase complex, which is composed of at least SecY, SecE and SecG.

It localises to the plastid. Its subcellular location is the chloroplast thylakoid membrane. Functionally, the central subunit of the protein translocation channel SecYE. Consists of two halves formed by TMs 1-5 and 6-10. These two domains form a lateral gate at the front which open onto the bilayer between TMs 2 and 7, and are clamped together by SecE at the back. The channel is closed by both a pore ring composed of hydrophobic SecY resides and a short helix (helix 2A) on the extracellular side of the membrane which forms a plug. This chain is Protein translocase subunit SecY, found in Pyropia yezoensis (Susabi-nori).